The chain runs to 77 residues: Small ribosomal subunit protein bS18 (77 aa).

This sequence belongs to the bacterial ribosomal protein bS18 family. Part of the 30S ribosomal subunit. Forms a tight heterodimer with protein bS6.

Binds as a heterodimer with protein bS6 to the central domain of the 16S rRNA, where it helps stabilize the platform of the 30S subunit. This is Small ribosomal subunit protein bS18 from Bacillus thuringiensis subsp. konkukian (strain 97-27).